A 331-amino-acid polypeptide reads, in one-letter code: MRGYLVAIFLSAVFLYYVLHCILWGTNVYWVAPVEMKRRNKIQPCLSKPAFASLLRFHQFHPFLCAADFRKIASLYGSDKFDLPYGMRTSAEYFRLALSKLQSCDLFDEFDNIPCKKCVVVGNGGVLKNKTLGEKIDSYDVIIRMNNGPVLGHEEEVGRRTTFRLFYPESVFSDPIHNDPNTTVILTAFKPHDLRWLLELLMGDKINTNGFWKKPALNLIYKPYQIRILDPFIIRTAAYELLHFPKVFPKNQKPKHPTTGIIAITLAFYICHEVHLAGFKYNFSDLKSPLHYYGNATMSLMNKNAYHNVTAEQLFLKDIIEKNLVINLTQD.

At 1–4 (MRGY) the chain is on the cytoplasmic side. Residues 5–25 (LVAIFLSAVFLYYVLHCILWG) traverse the membrane as a helical; Signal-anchor for type II membrane protein segment. The Lumenal portion of the chain corresponds to 26 to 331 (TNVYWVAPVE…KNLVINLTQD (306 aa)). N-linked (GlcNAc...) asparagine glycosylation is found at Asn-129, Asn-181, Asn-282, Asn-295, Asn-308, and Asn-327.

It belongs to the glycosyltransferase 29 family. As to expression, ubiquitous.

The protein localises to the golgi apparatus membrane. It catalyses the reaction a neolactoside nLc4Cer(d18:1(4E)) + CMP-N-acetyl-beta-neuraminate = a neolactoside IV(3)-alpha-NeuAc-nLc4Cer(d18:1(4E)) + CMP + H(+). It carries out the reaction a beta-D-galactosyl-(1-&gt;4)-N-acetyl-beta-D-glucosaminyl derivative + CMP-N-acetyl-beta-neuraminate = an N-acetyl-alpha-neuraminyl-(2-&gt;3)-beta-D-galactosyl-(1-&gt;4)-N-acetyl-beta-D-glucosaminyl derivative + CMP + H(+). The catalysed reaction is a neolactoside nLc6Cer(d18:1(4E)) + CMP-N-acetyl-beta-neuraminate = a neolactoside VI(3)-alpha-NeuNAc-nLc6Cer(d18:1(4E)) + CMP + H(+). In terms of biological role, transfers the sialyl residue from CMP-N-acetyl-beta-neuraminate to the terminal galactose residue on sugar chains of glycoproteins and glycolipids. It's alpha-2,3-sialyltransferase activity is specific toward type II glycan chains (Galbeta1-4GlcNAc) on glycoproteins and glycolipids such as neolactosides nLc4Cer and nLc6Cer, whose sialyl-products serve as precursors for the Lewis X antigen. Critically involved in the synthesis of functional selectin ligands needed for neutrophil recruitment during inflammation and lymphocyte homing to the lymph nodes. The sequence is that of Type 2 lactosamine alpha-2,3-sialyltransferase (ST3GAL6) from Homo sapiens (Human).